We begin with the raw amino-acid sequence, 426 residues long: UPF0597 protein CLD_2825 (426 aa).

This sequence belongs to the UPF0597 family.

This chain is UPF0597 protein CLD_2825, found in Clostridium botulinum (strain Okra / Type B1).